A 603-amino-acid chain; its full sequence is DNA mismatch repair protein MutL (603 aa).

It belongs to the DNA mismatch repair MutL/HexB family.

In terms of biological role, this protein is involved in the repair of mismatches in DNA. It is required for dam-dependent methyl-directed DNA mismatch repair. May act as a 'molecular matchmaker', a protein that promotes the formation of a stable complex between two or more DNA-binding proteins in an ATP-dependent manner without itself being part of a final effector complex. This Nitrobacter hamburgensis (strain DSM 10229 / NCIMB 13809 / X14) protein is DNA mismatch repair protein MutL.